The sequence spans 218 residues: Large ribosomal subunit protein eL14 (218 aa).

Lys-79 carries the post-translational modification N6-acetyllysine. Lys-85 is subject to N6-acetyllysine; alternate. An N6-succinyllysine; alternate modification is found at Lys-85. A Glycyl lysine isopeptide (Lys-Gly) (interchain with G-Cter in SUMO2) cross-link involves residue Lys-124. The residue at position 139 (Ser-139) is a Phosphoserine. The interval Val-159–Ala-218 is disordered. Tandem repeats lie at residues Gln-174–Ala-178, Gln-179–Ala-183, Gln-184–Gly-188, Gln-189–Gln-193, Lys-196–Gln-198, and Lys-199–Gln-201. The tract at residues Gln-174–Gln-193 is 4 X 5 AA tandem repeats of Q-K-A-[PAS]-X. The segment at Lys-196 to Gln-201 is 2 X 3 AA tandem repeats of K-[GA]-Q. At Lys-207 the chain carries N6-succinyllysine.

It belongs to the eukaryotic ribosomal protein eL14 family. In terms of assembly, component of the large ribosomal subunit.

It localises to the cytoplasm. Functionally, component of the large ribosomal subunit. The ribosome is a large ribonucleoprotein complex responsible for the synthesis of proteins in the cell. The sequence is that of Large ribosomal subunit protein eL14 (RPL14) from Oryctolagus cuniculus (Rabbit).